A 607-amino-acid chain; its full sequence is Glutamyl-tRNA(Gln) amidotransferase subunit E (607 aa).

It belongs to the GatB/GatE family. GatE subfamily. Heterodimer of GatD and GatE.

It carries out the reaction L-glutamyl-tRNA(Gln) + L-glutamine + ATP + H2O = L-glutaminyl-tRNA(Gln) + L-glutamate + ADP + phosphate + H(+). In terms of biological role, allows the formation of correctly charged Gln-tRNA(Gln) through the transamidation of misacylated Glu-tRNA(Gln) in organisms which lack glutaminyl-tRNA synthetase. The reaction takes place in the presence of glutamine and ATP through an activated gamma-phospho-Glu-tRNA(Gln). The GatDE system is specific for glutamate and does not act on aspartate. In Pyrobaculum islandicum (strain DSM 4184 / JCM 9189 / GEO3), this protein is Glutamyl-tRNA(Gln) amidotransferase subunit E.